Consider the following 1221-residue polypeptide: Reverse gyrase subunit B (1221 aa).

An RG N-terminal-type zinc finger spans residues 56–97 (NEPVAIFGSSCVLCGGDCSSVRLTSRIGICERCLPVDTETLR). Zn(2+) contacts are provided by cysteine 66, cysteine 69, cysteine 85, and cysteine 88. Residues glutamine 161 and 178 to 185 (APTGTGKT) each bind ATP. The region spanning 165 to 400 (TRRLVKGCSF…AVVRELFDFE (236 aa)) is the Helicase ATP-binding domain. The DEAD box motif lies at 284–287 (DDVD). The Helicase C-terminal domain occupies 424–600 (AVERIVRKAG…PLSLNTLMKL (177 aa)). Residues 779-935 (SALMIVESPN…QVYRTEFHEV (157 aa)) form the Toprim domain. Glutamate 785 is a Mg(2+) binding site. Residues 856–882 (LGRCSECGEQVVGSEECPNCGGEVELK) form an RG C-terminal-type zinc finger. Residues cysteine 859, cysteine 862, cysteine 872, and cysteine 875 each coordinate Zn(2+). Aspartate 904 contributes to the Mg(2+) binding site. A Topo IA-type catalytic domain is found at 953 to 1221 (DAGRVSAQIL…MLHLAGVSGR (269 aa)).

This sequence in the C-terminal section; belongs to the type IA topoisomerase family. In the N-terminal section; belongs to the DEAD box helicase family. DDVD subfamily. In terms of assembly, heterodimer of an RgyrA and RgyrB subunit. The topoisomerase domain is shared between the two subunits. It depends on Zn(2+) as a cofactor. The cofactor is Mg(2+). In terms of processing, the N-terminus is partially blocked.

The protein resides in the cytoplasm. It catalyses the reaction ATP + H2O = ADP + phosphate + H(+). Its function is as follows. Modifies the topological state of DNA by introducing positive supercoils in an ATP-dependent process; dATP also allows positive supercoiling. Increases the linking number in steps of +1. Only this subunit binds ATP, it does so in a DNA- and RgyA-independent manner. Hydrolyzes ATP only in the presence of DNA. The RgyA subunit transiently cleaves a single DNA strand and remains covalently bound to the 5' DNA end probably through a tyrosine residue. It changes linking number in steps of one, and nicks DNA preferentially at 5'-CNNN | 3'-sites with a strong preference for 4 pyrimidine residues. There are about 1000 heterodimers per cell. May be involved in rewinding the DNA strands in the regions of the chromosome that have opened up to allow transcription or replication. In terms of biological role, this subunit expressed in E.coli only has DNA-dependent ATPase activity at 80 degrees Celsius. Reverse gyrase activity is reconstituted after incubation at 80 degrees Celsius for 5 minutes, positive supercoiling requires ATP and Mg(2+). In the presence of ATP it binds and nicks substrate but does not make closed product. The polypeptide is Reverse gyrase subunit B (Methanopyrus kandleri (strain AV19 / DSM 6324 / JCM 9639 / NBRC 100938)).